The sequence spans 426 residues: Adenylosuccinate synthetase 2 (426 aa).

Residues 12–18 and 40–42 each bind GTP; these read GDEGKGK and GHT. The Proton acceptor role is filled by Asp13. Residues Asp13 and Gly40 each coordinate Mg(2+). IMP contacts are provided by residues 13 to 16, 38 to 41, Arg147, Asn223, Thr238, and Arg302; these read DEGK and NAGH. The active-site Proton donor is the His41. Residue 298 to 304 coordinates substrate; the sequence is TNTGRRR. Residues Arg304, 330–332, and 412–414 each bind GTP; these read KLD and GVG.

It belongs to the adenylosuccinate synthetase family. Homodimer. Mg(2+) is required as a cofactor.

The protein localises to the cytoplasm. The catalysed reaction is IMP + L-aspartate + GTP = N(6)-(1,2-dicarboxyethyl)-AMP + GDP + phosphate + 2 H(+). It participates in purine metabolism; AMP biosynthesis via de novo pathway; AMP from IMP: step 1/2. Its function is as follows. Plays an important role in the de novo pathway and in the salvage pathway of purine nucleotide biosynthesis. Catalyzes the first committed step in the biosynthesis of AMP from IMP. The sequence is that of Adenylosuccinate synthetase 2 from Laccaria bicolor (strain S238N-H82 / ATCC MYA-4686) (Bicoloured deceiver).